The chain runs to 295 residues: Glycine N-phenylacetyltransferase (295 aa).

Lysine 43 bears the N6-acetyllysine mark. Lysine 48 is subject to N6-acetyllysine; alternate. Lysine 48 is modified (N6-succinyllysine; alternate). Residue lysine 80 is modified to N6-acetyllysine. An N6-acetyllysine; alternate modification is found at lysine 182. Residue lysine 182 is modified to N6-succinyllysine; alternate.

The protein belongs to the glycine N-acyltransferase family.

It localises to the mitochondrion. The catalysed reaction is phenylacetyl-CoA + glycine = phenylacetylglycine + CoA + H(+). Its function is as follows. Mitochondrial acyltransferase which transfers the acyl group to the N-terminus of glycine. Can conjugate a multitude of substrates to form a variety of N-acylglycines. Catalyzes the conjugation of arylacetic acids with glycine but does not have activity towards any alkyl-CoA. The polypeptide is Glycine N-phenylacetyltransferase (Bos taurus (Bovine)).